A 457-amino-acid chain; its full sequence is Ribosomal RNA-processing protein 8 (457 aa).

Disordered stretches follow at residues 52–114 and 148–235; these read LSQQ…EVER and SLNS…QETR. 3 positions are modified to phosphoserine: S62, S64, and S105. Residues 148 to 165 are compositionally biased toward polar residues; that stretch reads SLNSVDQTVHNSRTSTAT. Residues S172 and S177 each carry the phosphoserine modification. The segment covering 174–183 has biased composition (polar residues); it reads ESASPNSSHT. A compositionally biased stretch (basic residues) spans 184–203; the sequence is LSRKQWRNRQKNKRRHKNKF. H282, G317, D335, D347, M348, and C364 together coordinate S-adenosyl-L-methionine.

This sequence belongs to the methyltransferase superfamily. RRP8 family. As to quaternary structure, component of the eNoSC complex, composed of SIRT1, SUV39H1 and RRP8.

It localises to the nucleus. The protein localises to the nucleolus. Functionally, essential component of the eNoSC (energy-dependent nucleolar silencing) complex, a complex that mediates silencing of rDNA in response to intracellular energy status and acts by recruiting histone-modifying enzymes. The eNoSC complex is able to sense the energy status of cell: upon glucose starvation, elevation of NAD(+)/NADP(+) ratio activates SIRT1, leading to histone H3 deacetylation followed by dimethylation of H3 at 'Lys-9' (H3K9me2) by SUV39H1 and the formation of silent chromatin in the rDNA locus. In the complex, RRP8 binds to H3K9me2 and probably acts as a methyltransferase. Its substrates are however unknown. This is Ribosomal RNA-processing protein 8 (Rrp8) from Rattus norvegicus (Rat).